A 220-amino-acid polypeptide reads, in one-letter code: Probable L-serine dehydratase, beta chain (220 aa).

The region spanning 148–220 is the ACT domain; it reads AILVVHNDKF…NIIQVTKIAD (73 aa).

Belongs to the iron-sulfur dependent L-serine dehydratase family. In terms of assembly, heterodimer of an alpha chain and a beta chain. [4Fe-4S] cluster is required as a cofactor.

It catalyses the reaction L-serine = pyruvate + NH4(+). Its pathway is carbohydrate biosynthesis; gluconeogenesis. The polypeptide is Probable L-serine dehydratase, beta chain (sdaAB) (Bacillus subtilis (strain 168)).